Here is a 562-residue protein sequence, read N- to C-terminus: NAD-dependent malic enzyme (562 aa).

Y101 functions as the Proton donor in the catalytic mechanism. R154 provides a ligand contact to NAD(+). K172 (proton acceptor) is an active-site residue. The a divalent metal cation site is built by E243, D244, and D267. Residues D267 and N415 each coordinate NAD(+).

Belongs to the malic enzymes family. Homotetramer. Mg(2+) is required as a cofactor. Mn(2+) serves as cofactor.

It carries out the reaction (S)-malate + NAD(+) = pyruvate + CO2 + NADH. It catalyses the reaction oxaloacetate + H(+) = pyruvate + CO2. The sequence is that of NAD-dependent malic enzyme from Shewanella denitrificans (strain OS217 / ATCC BAA-1090 / DSM 15013).